A 251-amino-acid polypeptide reads, in one-letter code: ATP synthase subunit a 2 (251 aa).

Transmembrane regions (helical) follow at residues 35–55 (GQVF…SLLA), 94–114 (LPFI…GSLI), 133–153 (INTT…AGLS), 198–218 (LVVA…LMAL), and 219–239 (GLFT…AYIH).

It belongs to the ATPase A chain family. F-type ATPases have 2 components, CF(1) - the catalytic core - and CF(0) - the membrane proton channel. CF(1) has five subunits: alpha(3), beta(3), gamma(1), delta(1), epsilon(1). CF(0) has four main subunits: a, b, b' and c.

The protein resides in the cellular thylakoid membrane. Its function is as follows. Key component of the proton channel; it plays a direct role in the translocation of protons across the membrane. This Crocosphaera subtropica (strain ATCC 51142 / BH68) (Cyanothece sp. (strain ATCC 51142)) protein is ATP synthase subunit a 2.